A 236-amino-acid chain; its full sequence is Elastase-1 (236 aa).

Residues 1–236 (VVGGRVAQPN…AYISWMNGIM (236 aa)) enclose the Peptidase S1 domain. A disulfide bridge connects residues cysteine 30 and cysteine 46. The active-site Charge relay system is histidine 45. Positions 59, 61, 64, 66, and 69 each coordinate Ca(2+). The active-site Charge relay system is the aspartate 93. 3 disulfides stabilise this stretch: cysteine 127–cysteine 193, cysteine 158–cysteine 174, and cysteine 183–cysteine 213. The Charge relay system role is filled by serine 187.

The protein belongs to the peptidase S1 family. Elastase subfamily. It depends on Ca(2+) as a cofactor. In terms of tissue distribution, pancreas.

Its subcellular location is the secreted. The catalysed reaction is Hydrolysis of proteins, including elastin. Preferential cleavage: Ala-|-Xaa.. Its function is as follows. Acts upon elastin. The polypeptide is Elastase-1 (Salmo salar (Atlantic salmon)).